Reading from the N-terminus, the 412-residue chain is Serine hydroxymethyltransferase (412 aa).

(6S)-5,6,7,8-tetrahydrofolate is bound by residues Leu117 and Gly121–Leu123. An N6-(pyridoxal phosphate)lysine modification is found at Lys226. (6S)-5,6,7,8-tetrahydrofolate-binding positions include Glu242 and Ser350–Phe352.

Belongs to the SHMT family. Homodimer. It depends on pyridoxal 5'-phosphate as a cofactor.

It localises to the cytoplasm. It carries out the reaction (6R)-5,10-methylene-5,6,7,8-tetrahydrofolate + glycine + H2O = (6S)-5,6,7,8-tetrahydrofolate + L-serine. Its pathway is one-carbon metabolism; tetrahydrofolate interconversion. It participates in amino-acid biosynthesis; glycine biosynthesis; glycine from L-serine: step 1/1. Catalyzes the reversible interconversion of serine and glycine with tetrahydrofolate (THF) serving as the one-carbon carrier. Also exhibits THF-independent aldolase activity toward beta-hydroxyamino acids, producing glycine and aldehydes, via a retro-aldol mechanism. The chain is Serine hydroxymethyltransferase from Methanosarcina mazei (strain ATCC BAA-159 / DSM 3647 / Goe1 / Go1 / JCM 11833 / OCM 88) (Methanosarcina frisia).